We begin with the raw amino-acid sequence, 156 residues long: 6,7-dimethyl-8-ribityllumazine synthase (156 aa).

5-amino-6-(D-ribitylamino)uracil is bound by residues Phe23, 57 to 59 (SFE), and 81 to 83 (AVI). 86-87 (GT) lines the (2S)-2-hydroxy-3-oxobutyl phosphate pocket. His89 (proton donor) is an active-site residue. Residue Tyr114 coordinates 5-amino-6-(D-ribitylamino)uracil. Arg128 serves as a coordination point for (2S)-2-hydroxy-3-oxobutyl phosphate.

This sequence belongs to the DMRL synthase family. As to quaternary structure, forms an icosahedral capsid composed of 60 subunits, arranged as a dodecamer of pentamers.

It catalyses the reaction (2S)-2-hydroxy-3-oxobutyl phosphate + 5-amino-6-(D-ribitylamino)uracil = 6,7-dimethyl-8-(1-D-ribityl)lumazine + phosphate + 2 H2O + H(+). Its pathway is cofactor biosynthesis; riboflavin biosynthesis; riboflavin from 2-hydroxy-3-oxobutyl phosphate and 5-amino-6-(D-ribitylamino)uracil: step 1/2. Its function is as follows. Catalyzes the formation of 6,7-dimethyl-8-ribityllumazine by condensation of 5-amino-6-(D-ribitylamino)uracil with 3,4-dihydroxy-2-butanone 4-phosphate. This is the penultimate step in the biosynthesis of riboflavin. This is 6,7-dimethyl-8-ribityllumazine synthase from Halorhodospira halophila (strain DSM 244 / SL1) (Ectothiorhodospira halophila (strain DSM 244 / SL1)).